The chain runs to 85 residues: Antitoxin VapB43 (85 aa).

Positions 37 to 60 (GLNPPKPQAAGRYRVQPSGKGGLR) are disordered.

Functionally, antitoxin component of a type II toxin-antitoxin (TA) system. The protein is Antitoxin VapB43 (vapB43) of Mycobacterium tuberculosis (strain CDC 1551 / Oshkosh).